Consider the following 163-residue polypeptide: 3-isopropylmalate dehydratase small subunit (163 aa).

The protein belongs to the LeuD family. LeuD type 2 subfamily. As to quaternary structure, heterodimer of LeuC and LeuD.

It catalyses the reaction (2R,3S)-3-isopropylmalate = (2S)-2-isopropylmalate. Its pathway is amino-acid biosynthesis; L-leucine biosynthesis; L-leucine from 3-methyl-2-oxobutanoate: step 2/4. Catalyzes the isomerization between 2-isopropylmalate and 3-isopropylmalate, via the formation of 2-isopropylmaleate. This Ruminiclostridium cellulolyticum (strain ATCC 35319 / DSM 5812 / JCM 6584 / H10) (Clostridium cellulolyticum) protein is 3-isopropylmalate dehydratase small subunit.